A 161-amino-acid chain; its full sequence is Trivalent organoarsenical cleaving enzyme (161 aa).

A VOC domain is found at 2–119 (KYAHVGLNVT…DGNEWEFFYT (118 aa)). Residues H5 and H62 each coordinate Fe(2+). Roxarsone (III) is bound by residues C96 and C97. Residue E115 coordinates Fe(2+).

It depends on Fe(2+) as a cofactor.

The enzyme catalyses methylarsonous acid + AH2 + O2 = arsenite + methanol + A + H(+). It catalyses the reaction roxarsone (III) + AH2 + O2 = 4-hydroxy-3-nitrocyclohexa-2,5-dien-1-one + arsenite + A + H(+). It carries out the reaction nitarsone (III) + AH2 + O2 = 4-nitrocyclohexa-2,5-dien-1-one + arsenite + A + H(+). The catalysed reaction is 4-aminophenylarsonous acid + AH2 + O2 = 4-aminocyclohexa-2,5-dien-1-one + arsenite + A. With respect to regulation, inhibited in vitro by reagents that chemically modify histidine residues (diethylpyrocarbonate (DEPC)), aspartate or glutamate residues (1-ethyl-3-(3-(dimethylamino)propyl) carbodiimide (EDC)), or cysteine residues (N-ethylmaleimide (NEM) or iodoacetamide (IAA)). Its function is as follows. Nonheme iron-dependent dioxygenase that can break carbon-arsenic bonds, playing a role in the detoxification of environmental organoarsenical compounds. Catalyzes the oxygen-dependent demethylation of highly toxic methylarsonous acid (MAs(III)) to arsenite, which can then be exported out of the cell. Can also cleave the C-As bond in several trivalent aromatic arsenicals, including roxarsone (III), nitarsone (III) and (4-aminophenyl)arsonous acid. Organoarsenical degradation by this enzyme is proposed to have a significant impact on the arsenic biogeocycle that maintains a balance between organic and inorganic species. The protein is Trivalent organoarsenical cleaving enzyme of Bacillus sp. (strain MD1).